Consider the following 323-residue polypeptide: MTIRAVVRGVGHYLPDRVVPNSELEAIVETTDEWIRTRSGIERRHFAAEGQTTSDLAARAARAALDDAGLQPDDIDTLIVATSTADLTFPSAATMVQAALGMTRGFAFDVQAVCAGFVYALANADALIRSGQAQRVLVIGAETFSRLMDWNDRATCVLFGDGAGAVVLEGTESAGTSADRGILATDLHSDGRFKDLLYVDGGSSTGTTGHLRMQGREVFRHAVEKLAETAHTALEKAGLGAGDVDWIVPHQANLRIISATAQRMQVPMDRVILTVQDHGNTSAASIPLALSVGKARGQIKEGDLLVTEAIGGGLAWGSVVLRW.

Residues Cys114 and His250 contribute to the active site. Residues 251-255 (QANLR) are ACP-binding. Residue Asn280 is part of the active site.

Belongs to the thiolase-like superfamily. FabH family. Homodimer.

The protein localises to the cytoplasm. The catalysed reaction is malonyl-[ACP] + acetyl-CoA + H(+) = 3-oxobutanoyl-[ACP] + CO2 + CoA. It participates in lipid metabolism; fatty acid biosynthesis. Catalyzes the condensation reaction of fatty acid synthesis by the addition to an acyl acceptor of two carbons from malonyl-ACP. Catalyzes the first condensation reaction which initiates fatty acid synthesis and may therefore play a role in governing the total rate of fatty acid production. Possesses both acetoacetyl-ACP synthase and acetyl transacylase activities. Its substrate specificity determines the biosynthesis of branched-chain and/or straight-chain of fatty acids. The protein is Beta-ketoacyl-[acyl-carrier-protein] synthase III of Cereibacter sphaeroides (strain ATCC 17029 / ATH 2.4.9) (Rhodobacter sphaeroides).